The chain runs to 147 residues: Large ribosomal subunit protein uL15 (147 aa).

Basic and acidic residues predominate over residues 1–20 (MTLRLNDLKPADGARTERTR). Positions 1 to 61 (MTLRLNDLKP…GFEGGQTPMQ (61 aa)) are disordered. Gly residues predominate over residues 23–33 (RGIGSGLGKTA). The segment covering 34 to 47 (GRGHKGSFARKGGG) has biased composition (basic residues).

The protein belongs to the universal ribosomal protein uL15 family. Part of the 50S ribosomal subunit.

Functionally, binds to the 23S rRNA. The sequence is that of Large ribosomal subunit protein uL15 from Xanthomonas axonopodis pv. citri (strain 306).